Reading from the N-terminus, the 90-residue chain is Neurotoxin LmNaTx19 (90 aa).

An N-terminal signal peptide occupies residues Met-1 to Cys-19. The LCN-type CS-alpha/beta domain maps to Lys-21–Gly-80. Cystine bridges form between Cys-31/Cys-79, Cys-35/Cys-55, Cys-41/Cys-62, and Cys-45/Cys-64.

It belongs to the long (4 C-C) scorpion toxin superfamily. Sodium channel inhibitor family. Alpha subfamily. Expressed by the venom gland.

The protein resides in the secreted. Its function is as follows. Binds voltage-independently at site-3 of voltage-gated sodium channels (Nav) and inhibits the inactivation of the activated channels, thereby blocking neuronal transmission. In Lychas mucronatus (Chinese swimming scorpion), this protein is Neurotoxin LmNaTx19.